The primary structure comprises 437 residues: Ribosomal protein uS12 methylthiotransferase RimO (437 aa).

An MTTase N-terminal domain is found at 3-118 (KKFYITTLGC…AGKILREKFP (116 aa)). The [4Fe-4S] cluster site is built by Cys12, Cys48, Cys81, Cys157, Cys161, and Cys164. In terms of domain architecture, Radical SAM core spans 143-370 (NYSKPYAYVK…RDSHLEILEE (228 aa)). In terms of domain architecture, TRAM spans 373–437 (ESRIGRTYDA…YEYDMNGTWV (65 aa)).

This sequence belongs to the methylthiotransferase family. RimO subfamily. Requires [4Fe-4S] cluster as cofactor.

It localises to the cytoplasm. The enzyme catalyses L-aspartate(89)-[ribosomal protein uS12]-hydrogen + (sulfur carrier)-SH + AH2 + 2 S-adenosyl-L-methionine = 3-methylsulfanyl-L-aspartate(89)-[ribosomal protein uS12]-hydrogen + (sulfur carrier)-H + 5'-deoxyadenosine + L-methionine + A + S-adenosyl-L-homocysteine + 2 H(+). Functionally, catalyzes the methylthiolation of an aspartic acid residue of ribosomal protein uS12. The polypeptide is Ribosomal protein uS12 methylthiotransferase RimO (Leptospira interrogans serogroup Icterohaemorrhagiae serovar Lai (strain 56601)).